We begin with the raw amino-acid sequence, 1667 residues long: Myomesin-1 (1667 aa).

Residues serine 124 and serine 142 each carry the phosphoserine modification. Low complexity predominate over residues 192 to 210 (SKQSTASKQSATSKRTTST). A disordered region spans residues 192–217 (SKQSTASKQSATSKRTTSTLQREETF). Ig-like C2-type domains are found at residues 258–349 (PEFI…ASVV) and 376–478 (PYGY…AYVF). 3 consecutive Fibronectin type-III domains span residues 492-587 (APLD…ALDP), 620-714 (PPTD…VVGD), and 721-814 (APGK…VKAA). Positions 818 to 915 (GVSPDVWPQL…PKKKKDPVAV (98 aa)) are disordered. Residues serine 863 and serine 867 each carry the phosphoserine modification. The segment covering 885–894 (EPLSSPPQEA) has biased composition (low complexity). Fibronectin type-III domains lie at 918–1016 (APYD…CEEW) and 1023–1122 (PPHS…TRPG). A Phosphoserine modification is found at serine 1036. 3 consecutive Ig-like C2-type domains span residues 1114–1212 (PVVA…EEMK), 1340–1426 (PHFA…LKLV), and 1555–1644 (RVLG…FTVS).

Homodimer. Interacts with TTN/titin and PNKD. As to expression, ubiquitously expressed in all striated muscles. Expressed in all fiber types.

The protein resides in the cytoplasm. It is found in the myofibril. The protein localises to the sarcomere. Its subcellular location is the m line. Functionally, may link the intermediate filament cytoskeleton to the M-disk of the myofibrils in striated muscle. May also contact myosin filaments. Also binds beta-integrins. The sequence is that of Myomesin-1 (Myom1) from Mus musculus (Mouse).